The primary structure comprises 253 residues: MAGHSKFKNIQHRKGAQDKKRAKVFTKLIREIVTAVKAGSTNPDNNPRLRTALATARSQNLPKERIDKAINSANDSANNENYTEIRYEGYAPGGIAIIVEALTDNKNRTAAEVRSSFTKYGGNLGETGSVNFLFKHCGVIQYPLEISSAENILETAIEAGTDDIVSDEVLHTIYTDIENFSKVLEFLTDKYGTAEEAYIGWVPLNTIIIDDKEKAEKLLKLVDLLEESDDVQRVFGNYELSDEIYEILQGSDE.

The interval 1-21 (MAGHSKFKNIQHRKGAQDKKR) is disordered.

Belongs to the TACO1 family.

The protein localises to the cytoplasm. The protein is Probable transcriptional regulatory protein RBE_0568 of Rickettsia bellii (strain RML369-C).